The primary structure comprises 66 residues: Sarcoplasmic/endoplasmic reticulum calcium ATPase regulator ARLN (66 aa).

The residue at position 1 (methionine 1) is an N-acetylmethionine. The segment at 1–37 (MEVDAPGVDGRDGLRERRGFSEGGRQNFDVRPQSGAN) is disordered. The span at 9-20 (DGRDGLRERRGF) shows a compositional bias: basic and acidic residues. The helical transmembrane segment at 45 to 65 (WLDLWLFILFDVVVFLFVYFL) threads the bilayer.

Homooligomer. Can also form heterooligomers with other sarcoplasmic/endoplasmic reticulum calcium ATPase (SERCA) regulators ERLN, PLN, SLN and STRIT1/DWORF. Monomer. Interacts as a monomer with ATP2A2/SERCA2; the interaction results in inhibition of ATP2A2 Ca(2+) affinity.

It localises to the endoplasmic reticulum membrane. Functionally, inhibits the activity of the calcium ATPases ATP2A2/SERCA2 and ATP2A3/SERCA3 by decreasing their apparent affinity for Ca(2+). In Homo sapiens (Human), this protein is Sarcoplasmic/endoplasmic reticulum calcium ATPase regulator ARLN.